Reading from the N-terminus, the 400-residue chain is Lysophospholipid transporter LplT (400 aa).

The next 12 membrane-spanning stretches (helical) occupy residues 19–39 (VIVA…ATLA), 53–73 (VLQM…GQIA), 91–111 (AGAA…LVGI), 139–159 (LMEA…GVLA), 164–184 (IAAL…NLFI), 195–213 (SWRL…VVLW), 227–247 (LFWG…PVAL), 257–277 (YLNA…AKLV), 281–301 (TVSR…IFSL), 304–324 (ALLP…FFVV), 352–372 (NSAM…GVPA), and 373–393 (VAIG…LWIW).

This sequence belongs to the major facilitator superfamily. LplT (TC 2.A.1.42) family.

It localises to the cell inner membrane. In terms of biological role, catalyzes the facilitated diffusion of 2-acyl-glycero-3-phosphoethanolamine (2-acyl-GPE) into the cell. The sequence is that of Lysophospholipid transporter LplT from Salmonella schwarzengrund (strain CVM19633).